The primary structure comprises 491 residues: Chromosomal replication initiator protein DnaA (491 aa).

The tract at residues M1 to L69 is domain I, interacts with DnaA modulators. The segment at L69 to L154 is domain II. The interval D106 to K126 is disordered. Residues P155–S371 are domain III, AAA+ region. The ATP site is built by G199, G201, K202, and T203. The domain IV, binds dsDNA stretch occupies residues K372–R491.

This sequence belongs to the DnaA family. Oligomerizes as a right-handed, spiral filament on DNA at oriC.

It localises to the cytoplasm. Plays an essential role in the initiation and regulation of chromosomal replication. ATP-DnaA binds to the origin of replication (oriC) to initiate formation of the DNA replication initiation complex once per cell cycle. Binds the DnaA box (a 9 base pair repeat at the origin) and separates the double-stranded (ds)DNA. Forms a right-handed helical filament on oriC DNA; dsDNA binds to the exterior of the filament while single-stranded (ss)DNA is stabiized in the filament's interior. The ATP-DnaA-oriC complex binds and stabilizes one strand of the AT-rich DNA unwinding element (DUE), permitting loading of DNA polymerase. After initiation quickly degrades to an ADP-DnaA complex that is not apt for DNA replication. Binds acidic phospholipids. The chain is Chromosomal replication initiator protein DnaA from Francisella philomiragia subsp. philomiragia (strain ATCC 25017 / CCUG 19701 / FSC 153 / O#319-036).